The following is a 229-amino-acid chain: Probable ribonuclease H (229 aa).

The RNase H type-1 domain maps to L42–K164. Residues E60, D87, and D156 each coordinate a divalent metal cation.

It belongs to the RNase H family. A divalent metal cation is required as a cofactor.

It catalyses the reaction Endonucleolytic cleavage to 5'-phosphomonoester.. Its function is as follows. Endonuclease that specifically degrades the RNA of RNA-DNA hybrids. The polypeptide is Probable ribonuclease H (RNH1) (Acanthamoeba polyphaga mimivirus (APMV)).